Reading from the N-terminus, the 262-residue chain is Thrombin-like enzyme calobin-1 (262 aa).

The first 18 residues, 1–18 (MVLISVLANLLILQLSYA), serve as a signal peptide directing secretion. Residues 19 to 24 (QKSSEL) constitute a propeptide that is removed on maturation. Positions 25–253 (VIGGDECNIN…HLDWIQSIIA (229 aa)) constitute a Peptidase S1 domain. Cystine bridges form between Cys31-Cys165, Cys52-Cys68, Cys100-Cys260, Cys144-Cys214, Cys176-Cys193, and Cys204-Cys229. His67 functions as the Charge relay system in the catalytic mechanism. Asn105 carries N-linked (GlcNAc...) asparagine glycosylation. Asp112 functions as the Charge relay system in the catalytic mechanism. Ser208 functions as the Charge relay system in the catalytic mechanism.

It belongs to the peptidase S1 family. Snake venom subfamily. Monomer. Post-translationally, N-glycosylated. Expressed by the venom gland.

It is found in the secreted. With respect to regulation, strongly inhibited by PMSF, and moderately by benzamidine and soybean trypsin inhibitor. Its function is as follows. Thrombin-like snake venom serine protease. Has a coagulant activity. Acts on alpha-chains of fibrinogen (FGA) generating fibrinopeptide A. The polypeptide is Thrombin-like enzyme calobin-1 (Gloydius ussuriensis (Ussuri mamushi)).